The primary structure comprises 249 residues: Probable transcriptional regulatory protein aq_1575 (249 aa).

The protein belongs to the TACO1 family.

Its subcellular location is the cytoplasm. The chain is Probable transcriptional regulatory protein aq_1575 from Aquifex aeolicus (strain VF5).